A 718-amino-acid chain; its full sequence is Ribonuclease J (718 aa).

The interval 1–130 (MNDSRNRGRK…RGNRGGGRRN (130 aa)) is disordered. 2 stretches are compositionally biased toward low complexity: residues 55-91 (AAQGAQGSQDSQGSQNAQGSQNRESGNNNRNRSNNNR) and 100-118 (SGNANEGANNNSGNQNRQG). 6 residues coordinate Zn(2+): histidine 220, histidine 222, aspartate 224, histidine 225, histidine 287, and aspartate 309. 510-514 (HTSGH) is a substrate binding site. Histidine 536 is a Zn(2+) binding site.

This sequence belongs to the metallo-beta-lactamase superfamily. RNA-metabolizing metallo-beta-lactamase-like family. Bacterial RNase J subfamily. Homodimer, may be a subunit of the RNA degradosome. Requires Zn(2+) as cofactor.

The protein localises to the cytoplasm. Functionally, an RNase that has 5'-3' exonuclease and possibly endoonuclease activity. Involved in maturation of rRNA and in some organisms also mRNA maturation and/or decay. The protein is Ribonuclease J of Corynebacterium glutamicum (strain ATCC 13032 / DSM 20300 / JCM 1318 / BCRC 11384 / CCUG 27702 / LMG 3730 / NBRC 12168 / NCIMB 10025 / NRRL B-2784 / 534).